Here is a 505-residue protein sequence, read N- to C-terminus: ATP synthase subunit alpha (505 aa).

169-176 contributes to the ATP binding site; the sequence is GDRKTGKT.

This sequence belongs to the ATPase alpha/beta chains family. F-type ATPases have 2 components, CF(1) - the catalytic core - and CF(0) - the membrane proton channel. CF(1) has five subunits: alpha(3), beta(3), gamma(1), delta(1), epsilon(1). CF(0) has three main subunits: a(1), b(2) and c(9-12). The alpha and beta chains form an alternating ring which encloses part of the gamma chain. CF(1) is attached to CF(0) by a central stalk formed by the gamma and epsilon chains, while a peripheral stalk is formed by the delta and b chains.

Its subcellular location is the cell membrane. It carries out the reaction ATP + H2O + 4 H(+)(in) = ADP + phosphate + 5 H(+)(out). In terms of biological role, produces ATP from ADP in the presence of a proton gradient across the membrane. The alpha chain is a regulatory subunit. This Pediococcus pentosaceus (strain ATCC 25745 / CCUG 21536 / LMG 10740 / 183-1w) protein is ATP synthase subunit alpha.